The chain runs to 1642 residues: DNA-directed RNA polymerase I subunit RPA1 (1642 aa).

Positions 66, 69, 75, and 78 each coordinate Zn(2+). Asp-565, Asp-567, and Asp-569 together coordinate Mg(2+). The bridging helix stretch occupies residues 939–951 (PQDFFFHCMAGRE). The disordered stretch occupies residues 1337–1428 (DADKDDDNDL…GNDNDGDDKA (92 aa)). Residues 1340-1350 (KDDDNDLDNGD) are compositionally biased toward acidic residues. Positions 1351-1361 (EVGRSKAKAND) are enriched in basic and acidic residues. Acidic residues-rich tracts occupy residues 1362–1373 (DDSSDDNDDDDA) and 1386–1424 (KDYDDPDDVEELHDANDDDDEAEDEDDEEKGQDGNDNDG). Ser-1364 and Ser-1365 each carry phosphoserine.

Belongs to the RNA polymerase beta' chain family. As to quaternary structure, component of the RNA polymerase I (Pol I) complex consisting of at least 13 subunits. Phosphorylated.

Its subcellular location is the nucleus. The protein resides in the nucleolus. It catalyses the reaction RNA(n) + a ribonucleoside 5'-triphosphate = RNA(n+1) + diphosphate. DNA-dependent RNA polymerase catalyzes the transcription of DNA into RNA using the four ribonucleoside triphosphates as substrates. Largest and catalytic core component of RNA polymerase I which synthesizes ribosomal RNA precursors. Forms the polymerase active center together with the second largest subunit. A single stranded DNA template strand of the promoter is positioned within the central active site cleft of Pol I. A bridging helix emanates from RPA1 and crosses the cleft near the catalytic site and is thought to promote translocation of Pol I by acting as a ratchet that moves the RNA-DNA hybrid through the active site by switching from straight to bent conformations at each step of nucleotide addition. This chain is DNA-directed RNA polymerase I subunit RPA1 (RpI1), found in Drosophila melanogaster (Fruit fly).